We begin with the raw amino-acid sequence, 332 residues long: L-lactate dehydrogenase A chain (332 aa).

Residue Ala-2 is modified to N-acetylalanine. Lys-5 carries the post-translational modification N6-acetyllysine; alternate. An N6-succinyllysine; alternate modification is found at Lys-5. Position 14 is an N6-acetyllysine (Lys-14). 29-57 (GAVGMACAISILMKDLADELALVDVMEDK) is a binding site for NAD(+). Lys-57 carries the N6-acetyllysine; alternate modification. Residue Lys-57 forms a Glycyl lysine isopeptide (Lys-Gly) (interchain with G-Cter in SUMO2); alternate linkage. The residue at position 81 (Lys-81) is an N6-acetyllysine. Residue Arg-99 participates in NAD(+) binding. Arg-106 contacts substrate. N6-acetyllysine; alternate is present on Lys-118. Lys-118 carries the post-translational modification N6-succinyllysine; alternate. An N6-acetyllysine modification is found at Lys-126. Asn-138 is an NAD(+) binding site. Substrate contacts are provided by Asn-138 and Arg-169. Residue His-193 is the Proton acceptor of the active site. N6-acetyllysine is present on residues Lys-224 and Lys-232. Position 239 is a phosphotyrosine (Tyr-239). An N6-acetyllysine modification is found at Lys-243. Thr-248 provides a ligand contact to substrate. Thr-309 is subject to Phosphothreonine. At Lys-318 the chain carries N6-acetyllysine; alternate. N6-succinyllysine; alternate is present on Lys-318. Thr-322 bears the Phosphothreonine mark.

Belongs to the LDH/MDH superfamily. LDH family. As to quaternary structure, homotetramer. Interacts with PTEN upstream reading frame protein MP31. In terms of processing, ISGylated.

It is found in the cytoplasm. It catalyses the reaction (S)-lactate + NAD(+) = pyruvate + NADH + H(+). It participates in fermentation; pyruvate fermentation to lactate; (S)-lactate from pyruvate: step 1/1. Interconverts simultaneously and stereospecifically pyruvate and lactate with concomitant interconversion of NADH and NAD(+). In Mus musculus (Mouse), this protein is L-lactate dehydrogenase A chain (Ldha).